The chain runs to 73 residues: uncharacterized protein (73 aa).

The HTH deoR-type domain maps to 8–63 (MLTRIKSVYMFIQEKGLVTTQELVDEFGITPRTIQRDLNVLAYNDLVHSPSRGKWE). Residues 25–44 (VTTQELVDEFGITPRTIQRD) constitute a DNA-binding region (H-T-H motif).

This is an uncharacterized protein from Bacillus subtilis (strain 168).